Here is a 29-residue protein sequence, read N- to C-terminus: Cytochrome b6-f complex subunit 8 (29 aa).

A helical membrane pass occupies residues isoleucine 3 to valine 23.

This sequence belongs to the PetN family. As to quaternary structure, the 4 large subunits of the cytochrome b6-f complex are cytochrome b6, subunit IV (17 kDa polypeptide, PetD), cytochrome f and the Rieske protein, while the 4 small subunits are PetG, PetL, PetM and PetN. The complex functions as a dimer.

Its subcellular location is the plastid. It is found in the chloroplast thylakoid membrane. Functionally, component of the cytochrome b6-f complex, which mediates electron transfer between photosystem II (PSII) and photosystem I (PSI), cyclic electron flow around PSI, and state transitions. The sequence is that of Cytochrome b6-f complex subunit 8 from Solanum bulbocastanum (Wild potato).